The primary structure comprises 589 residues: Protein NRT1/ PTR FAMILY 7.2 (589 aa).

Transmembrane regions (helical) follow at residues 32–52 (WLTAILILVNQGLATLAFFGV) and 78–98 (WTGTVYIFSLLGAFLSDSYWG). Threonine 102 carries the post-translational modification Phosphothreonine. 10 consecutive transmembrane segments (helical) span residues 105–125 (IFQASFVAGLMMLSLSTGALL), 147–167 (VLFYLSVYLIALGYGGYQPNI), 187–207 (IAFFSYFYLALNLGSLFSNTV), 217–237 (WPLGFWASAGSAFAGLVLFLI), 343–363 (IWLCTILYSVVFTQMASLFVV), 377–397 (IPASSMSSFDILSVAFFIFAY), 423–443 (MGIGLVIAIMAMISAGIVEIH), 464–484 (IFWQVPQYMLIGASEVFMYVG), 504–524 (LCMASISLGNYVSSLLVSIVM), and 548–568 (FYFLLAGLTAADFVVYLICAK).

The protein belongs to the major facilitator superfamily. Proton-dependent oligopeptide transporter (POT/PTR) (TC 2.A.17) family. As to expression, expressed in xylem parenchyma cells within the vasculature. Expressed in siliques and flowers. Higher expression in shoots than in roots.

It localises to the cell membrane. Its function is as follows. Low-affinity nitrate transporter. Involved in nitrate removal from xylem sap. Not involved in oligopeptides transport. This chain is Protein NRT1/ PTR FAMILY 7.2 (NPF7.2), found in Arabidopsis thaliana (Mouse-ear cress).